The chain runs to 617 residues: Chaperone protein HscA homolog (617 aa).

It belongs to the heat shock protein 70 family.

In terms of biological role, chaperone involved in the maturation of iron-sulfur cluster-containing proteins. Has a low intrinsic ATPase activity which is markedly stimulated by HscB. This is Chaperone protein HscA homolog from Vibrio campbellii (strain ATCC BAA-1116).